The sequence spans 277 residues: Exosome complex component Rrp42 (277 aa).

This sequence belongs to the RNase PH family. Rrp42 subfamily. Component of the archaeal exosome complex. Forms a hexameric ring-like arrangement composed of 3 Rrp41-Rrp42 heterodimers. The hexameric ring associates with a trimer of Rrp4 and/or Csl4 subunits.

The protein localises to the cytoplasm. Functionally, non-catalytic component of the exosome, which is a complex involved in RNA degradation. Contributes to the structuring of the Rrp41 active site. The chain is Exosome complex component Rrp42 from Pyrococcus furiosus (strain ATCC 43587 / DSM 3638 / JCM 8422 / Vc1).